The sequence spans 185 residues: UPF0669 protein C6orf120 homolog (185 aa).

A signal peptide spans 1 to 23 (MATPWRCALLMILASQVVILVKC). The N-linked (GlcNAc...) asparagine glycan is linked to Asn-47.

It belongs to the UPF0669 family.

The protein resides in the secreted. May be involved in induction of apoptosis in CD4(+) T-cells, but not CD8(+) T-cells or hepatocytes. This is UPF0669 protein C6orf120 homolog from Rattus norvegicus (Rat).